The following is a 149-amino-acid chain: Large ribosomal subunit protein bL9 (149 aa).

Belongs to the bacterial ribosomal protein bL9 family.

Functionally, binds to the 23S rRNA. In Shewanella amazonensis (strain ATCC BAA-1098 / SB2B), this protein is Large ribosomal subunit protein bL9.